Consider the following 266-residue polypeptide: Exosome complex component Rrp42 (266 aa).

This sequence belongs to the RNase PH family. Rrp42 subfamily. As to quaternary structure, component of the archaeal exosome complex. Forms a hexameric ring-like arrangement composed of 3 Rrp41-Rrp42 heterodimers. The hexameric ring associates with a trimer of Rrp4 and/or Csl4 subunits.

The protein resides in the cytoplasm. Non-catalytic component of the exosome, which is a complex involved in RNA degradation. Contributes to the structuring of the Rrp41 active site. The polypeptide is Exosome complex component Rrp42 (Methanosarcina acetivorans (strain ATCC 35395 / DSM 2834 / JCM 12185 / C2A)).